The following is a 559-amino-acid chain: Urocanate hydratase (559 aa).

NAD(+) is bound by residues 49–50 (GG), glutamine 127, 173–175 (GMG), aspartate 193, arginine 198, 239–240 (NA), 260–264 (QTSAH), 270–271 (YL), and tyrosine 319. Cysteine 407 is an active-site residue. Glycine 489 is a binding site for NAD(+).

This sequence belongs to the urocanase family. Requires NAD(+) as cofactor.

Its subcellular location is the cytoplasm. It carries out the reaction 4-imidazolone-5-propanoate = trans-urocanate + H2O. The protein operates within amino-acid degradation; L-histidine degradation into L-glutamate; N-formimidoyl-L-glutamate from L-histidine: step 2/3. Functionally, catalyzes the conversion of urocanate to 4-imidazolone-5-propionate. This is Urocanate hydratase from Shouchella clausii (strain KSM-K16) (Alkalihalobacillus clausii).